The primary structure comprises 98 residues: Large ribosomal subunit protein uL23 (98 aa).

The protein belongs to the universal ribosomal protein uL23 family. As to quaternary structure, part of the 50S ribosomal subunit. Contacts protein L29, and trigger factor when it is bound to the ribosome.

One of the early assembly proteins it binds 23S rRNA. One of the proteins that surrounds the polypeptide exit tunnel on the outside of the ribosome. Forms the main docking site for trigger factor binding to the ribosome. In Rickettsia africae (strain ESF-5), this protein is Large ribosomal subunit protein uL23.